The sequence spans 900 residues: Alanine--tRNA ligase (900 aa).

4 residues coordinate Zn(2+): His568, His572, Cys672, and His676.

Belongs to the class-II aminoacyl-tRNA synthetase family. Requires Zn(2+) as cofactor.

The protein resides in the cytoplasm. It carries out the reaction tRNA(Ala) + L-alanine + ATP = L-alanyl-tRNA(Ala) + AMP + diphosphate. Catalyzes the attachment of alanine to tRNA(Ala) in a two-step reaction: alanine is first activated by ATP to form Ala-AMP and then transferred to the acceptor end of tRNA(Ala). Also edits incorrectly charged Ser-tRNA(Ala) and Gly-tRNA(Ala) via its editing domain. This Mycoplasma genitalium (strain ATCC 33530 / DSM 19775 / NCTC 10195 / G37) (Mycoplasmoides genitalium) protein is Alanine--tRNA ligase.